The primary structure comprises 212 residues: Probable nicotinate-nucleotide adenylyltransferase (212 aa).

The protein belongs to the NadD family.

The enzyme catalyses nicotinate beta-D-ribonucleotide + ATP + H(+) = deamido-NAD(+) + diphosphate. It participates in cofactor biosynthesis; NAD(+) biosynthesis; deamido-NAD(+) from nicotinate D-ribonucleotide: step 1/1. In terms of biological role, catalyzes the reversible adenylation of nicotinate mononucleotide (NaMN) to nicotinic acid adenine dinucleotide (NaAD). In Shewanella sp. (strain MR-7), this protein is Probable nicotinate-nucleotide adenylyltransferase.